Here is a 216-residue protein sequence, read N- to C-terminus: Peroxiredoxin (216 aa).

The Thioredoxin domain occupies Ile2–Ile158. Catalysis depends on Cys46, which acts as the Cysteine sulfenic acid (-SOH) intermediate. Arg121 contacts substrate. Residues Cys205 and Cys211 are joined by a disulfide bond.

The protein belongs to the peroxiredoxin family. Prx6 subfamily. In terms of assembly, homodecamer. Pentamer of dimers that assemble into a ring structure.

It localises to the cytoplasm. It carries out the reaction a hydroperoxide + [thioredoxin]-dithiol = an alcohol + [thioredoxin]-disulfide + H2O. Functionally, thiol-specific peroxidase that catalyzes the reduction of hydrogen peroxide and organic hydroperoxides to water and alcohols, respectively. Plays a role in cell protection against oxidative stress by detoxifying peroxides. This Pyrococcus furiosus (strain ATCC 43587 / DSM 3638 / JCM 8422 / Vc1) protein is Peroxiredoxin.